The chain runs to 567 residues: Interferon lambda receptor 1 (567 aa).

The first 22 residues, 1 to 22, serve as a signal peptide directing secretion; that stretch reads MSAWRIRVLATLCFLWQPRVHG. The Extracellular segment spans residues 23–229; that stretch reads QLPPPQNVTL…YEGEWKFPFS (207 aa). The 96-residue stretch at 26-121 folds into the Fibronectin type-III domain; sequence PPQNVTLLSK…KSQFKEYHLD (96 aa). An N-linked (GlcNAc...) asparagine glycan is attached at Asn29. Cystine bridges form between Cys74-Cys82, Cys86-Cys149, and Cys193-Cys215. Asn141 carries N-linked (GlcNAc...) asparagine glycosylation. A helical transmembrane segment spans residues 230–250; it reads ATIPVFVLLILLTSASIIWLL. The Cytoplasmic portion of the chain corresponds to 251 to 567; the sequence is KQDAKHKKMP…YQHSHYMRRS (317 aa).

It belongs to the type II cytokine receptor family. Heterodimer with IL10RB.

Its subcellular location is the membrane. Its function is as follows. The IFNLR1/IL10RB dimer is a receptor for the cytokine ligands IFNL2 and IFNL3 and mediates their antiviral activity. The ligand/receptor complex stimulate the activation of the JAK/STAT signaling pathway leading to the expression of IFN-stimulated genes (ISG), which contribute to the antiviral state. Determines the cell type specificity of the lambda interferon action. Shows a more restricted pattern of expression in the epithelial tissues thereby limiting responses to lambda interferons primarily to epithelial cells of the respiratory, gastrointestinal, and reproductive tracts. This is Interferon lambda receptor 1 (IFNLR1) from Gallus gallus (Chicken).